The following is a 378-amino-acid chain: Interleukin-3 receptor subunit alpha (378 aa).

The first 18 residues, M1–Q18, serve as a signal peptide directing secretion. The Extracellular portion of the chain corresponds to T19–R305. 4 N-linked (GlcNAc...) asparagine glycosylation sites follow: N46, N64, N80, and N109. 4 disulfides stabilise this stretch: C52-C68, C76-C195, C112-C122, and C151-C165. 2 N-linked (GlcNAc...) asparagine glycosylation sites follow: N212 and N218. C217 and C293 are oxidised to a cystine. Residues L282–S286 carry the WSXWS motif motif. A helical transmembrane segment spans residues T306 to C325. The Cytoplasmic segment spans residues R326 to T378. Positions L334–K342 match the Box 1 motif motif.

This sequence belongs to the type I cytokine receptor family. Type 5 subfamily. Interacts with IL3. Heterodimer of an alpha and a beta subunit. The beta subunit is common to the IL3, IL5 and GM-CSF receptors. Ubiquitinated by RNFT2 in response to IL3. Ubiquitination leads ligand-induced degradation by the proteasome. Ubiquitinated by RNF128 via 'Lys-27'-linked polyubiquitination, facilitating its degradation through the lysosomal pathway.

The protein resides in the cell membrane. Its function is as follows. Cell surface receptor for IL3 expressed on hematopoietic progenitor cells, monocytes and B-lymphocytes that controls the production and differentiation of hematopoietic progenitor cells into lineage-restricted cells. Ligand stimulation rapidly induces hetrodimerization with IL3RB, phosphorylation and enzyme activity of effector proteins such as JAK2 and PI3K that play a role in signaling cell proliferation and differentiation. Activation of JAK2 leads to STAT5-mediated transcriptional program. In Homo sapiens (Human), this protein is Interleukin-3 receptor subunit alpha.